Here is a 483-residue protein sequence, read N- to C-terminus: FAD-linked oxidoreductase easE (483 aa).

An FAD-binding PCMH-type domain is found at 10–193; the sequence is QGRLPFYSAV…TEATVRVFSD (184 aa).

Belongs to the oxygen-dependent FAD-linked oxidoreductase family. FAD serves as cofactor.

The protein operates within alkaloid biosynthesis; ergot alkaloid biosynthesis. Functionally, FAD-linked oxidoreductase; part of the gene cluster that mediates the biosynthesis of fungal ergot alkaloid. DmaW catalyzes the first step of ergot alkaloid biosynthesis by condensing dimethylallyl diphosphate (DMAP) and tryptophan to form 4-dimethylallyl-L-tryptophan. The second step is catalyzed by the methyltransferase easF that methylates 4-dimethylallyl-L-tryptophan in the presence of S-adenosyl-L-methionine, resulting in the formation of 4-dimethylallyl-L-abrine. The catalase easC and the FAD-dependent oxidoreductase easE then transform 4-dimethylallyl-L-abrine to chanoclavine-I which is further oxidized by easD in the presence of NAD(+), resulting in the formation of chanoclavine-I aldehyde. Agroclavine dehydrogenase easG then mediates the conversion of chanoclavine-I aldehyde to agroclavine via a non-enzymatic adduct reaction: the substrate is an iminium intermediate that is formed spontaneously from chanoclavine-I aldehyde in the presence of glutathione. The presence of easA is not required to complete this reaction. Further conversion of agroclavine to paspalic acid is a two-step process involving oxidation of agroclavine to elymoclavine and of elymoclavine to paspalic acid, the second step being performed by the elymoclavine oxidase cloA. Paspalic acid is then further converted to D-lysergic acid. Ergopeptines are assembled from D-lysergic acid and three different amino acids by the D-lysergyl-peptide-synthetases composed each of a monomudular and a trimodular nonribosomal peptide synthetase subunit. LpsB and lpsC encode the monomodular subunits responsible for D-lysergic acid activation and incorporation into the ergopeptine backbone. LpsA1 and A2 subunits encode the trimodular nonribosomal peptide synthetase assembling the tripeptide portion of ergopeptines. LpsA1 is responsible for formation of the major ergopeptine, ergotamine, and lpsA2 for alpha-ergocryptine, the minor ergopeptine of the total alkaloid mixture elaborated by C.purpurea. D-lysergyl-tripeptides are assembled by the nonribosomal peptide synthetases and released as N-(D-lysergyl-aminoacyl)-lactams. Cyclolization of the D-lysergyl-tripeptides is performed by the Fe(2+)/2-ketoglutarate-dependent dioxygenase easH which introduces a hydroxyl group into N-(D-lysergyl-aminoacyl)-lactam at alpha-C of the aminoacyl residue followed by spontaneous condensation with the terminal lactam carbonyl group. The chain is FAD-linked oxidoreductase easE from Claviceps purpurea (strain 20.1) (Ergot fungus).